The sequence spans 235 residues: MPKTSKRLASLVNKIEERAYEPLEAIKLVKENATAKFDETVEAHARLGIDPKYTDQQLRTTVALPHGTGQTVRIAVITRGEKVAEAKAAGAELAGDEDLVETISKGEMDFDLLIATPDMMPKVAKLGRVLGPRGLMPNPKAGTVTTDLAAAINEFKAGKLEFRADRTGIVHVRFGKASFSEGNLLDNLKTLQETIDRNKPSGAKGRYWKSLYVTSTMGPSVEVDIAALQDINKDG.

It belongs to the universal ribosomal protein uL1 family. Part of the 50S ribosomal subunit.

Functionally, binds directly to 23S rRNA. The L1 stalk is quite mobile in the ribosome, and is involved in E site tRNA release. Its function is as follows. Protein L1 is also a translational repressor protein, it controls the translation of the L11 operon by binding to its mRNA. This Synechococcus sp. (strain WH7803) protein is Large ribosomal subunit protein uL1.